Consider the following 552-residue polypeptide: Glutamate--tRNA ligase (552 aa).

Residues 41 to 51 (PSPTGFQHIGG) carry the 'HIGH' region motif. A 'KMSKS' region motif is present at residues 293-297 (KLSKR). Lys-296 is a binding site for ATP.

This sequence belongs to the class-I aminoacyl-tRNA synthetase family. Glutamate--tRNA ligase type 1 subfamily. Monomer.

The protein localises to the cytoplasm. It carries out the reaction tRNA(Glu) + L-glutamate + ATP = L-glutamyl-tRNA(Glu) + AMP + diphosphate. Functionally, catalyzes the attachment of glutamate to tRNA(Glu) in a two-step reaction: glutamate is first activated by ATP to form Glu-AMP and then transferred to the acceptor end of tRNA(Glu). The chain is Glutamate--tRNA ligase from Clostridium perfringens (strain SM101 / Type A).